The primary structure comprises 153 residues: MQINIYSIAKKDAKYQALLEELCMQCKQFGVEIKILNLLPQAVLKAQKISSAKAQQSYTQTFLPYIALPTALNLILHPTGHNYDSQSFAKLIESQHIVQFFIGGAFGFEESFVRLGKSVSLSAMTFNHKIAKLVLCEQIYRALSILHSHPYHK.

Residues isoleucine 75, glycine 103, and 121–126 (LSAMTF) contribute to the S-adenosyl-L-methionine site.

This sequence belongs to the RNA methyltransferase RlmH family. As to quaternary structure, homodimer.

It localises to the cytoplasm. The catalysed reaction is pseudouridine(1915) in 23S rRNA + S-adenosyl-L-methionine = N(3)-methylpseudouridine(1915) in 23S rRNA + S-adenosyl-L-homocysteine + H(+). Functionally, specifically methylates the pseudouridine at position 1915 (m3Psi1915) in 23S rRNA. The sequence is that of Ribosomal RNA large subunit methyltransferase H from Helicobacter hepaticus (strain ATCC 51449 / 3B1).